We begin with the raw amino-acid sequence, 463 residues long: Asparagine--tRNA ligase (463 aa).

Belongs to the class-II aminoacyl-tRNA synthetase family. As to quaternary structure, homodimer.

The protein localises to the cytoplasm. The enzyme catalyses tRNA(Asn) + L-asparagine + ATP = L-asparaginyl-tRNA(Asn) + AMP + diphosphate + H(+). This is Asparagine--tRNA ligase from Bacillus cereus (strain ATCC 10987 / NRS 248).